Reading from the N-terminus, the 515-residue chain is Putative pumilio homolog 8, chloroplastic (515 aa).

The disordered stretch occupies residues 1–33 (MMRGEFGEASSLSRSPSSPLQTEPHPQSPKFYR). Residues 1 to 70 (MMRGEFGEAS…LSSYFSNGLC (70 aa)) constitute a chloroplast transit peptide. The segment covering 10-20 (SSLSRSPSSPL) has biased composition (low complexity). The PUM-HD domain maps to 174-515 (SGVGALFDHQ…RIFSRNLLKN (342 aa)). Pumilio repeat units lie at residues 198 to 233 (EFQG…VIFS), 234 to 269 (EVIP…QIIL), 270 to 308 (MVTS…SLVK), 310 to 345 (ALRP…FIFE), 346 to 381 (DATK…KLVT), 382 to 417 (EISR…AMLA), 418 to 456 (QLKG…ELIS), and 457 to 490 (VPHF…TLVE).

It is found in the plastid. The protein resides in the chloroplast. The protein localises to the cytoplasm. Its function is as follows. Sequence-specific RNA-binding protein that regulates translation and mRNA stability by binding the 3'-UTR of target mRNAs. In Arabidopsis thaliana (Mouse-ear cress), this protein is Putative pumilio homolog 8, chloroplastic (APUM8).